We begin with the raw amino-acid sequence, 314 residues long: Porphobilinogen deaminase (314 aa).

Cysteine 241 is subject to S-(dipyrrolylmethanemethyl)cysteine.

The protein belongs to the HMBS family. Monomer. Dipyrromethane serves as cofactor.

The catalysed reaction is 4 porphobilinogen + H2O = hydroxymethylbilane + 4 NH4(+). It functions in the pathway porphyrin-containing compound metabolism; protoporphyrin-IX biosynthesis; coproporphyrinogen-III from 5-aminolevulinate: step 2/4. Its pathway is porphyrin-containing compound metabolism; chlorophyll biosynthesis. Functionally, tetrapolymerization of the monopyrrole PBG into the hydroxymethylbilane pre-uroporphyrinogen in several discrete steps. The chain is Porphobilinogen deaminase from Chloroherpeton thalassium (strain ATCC 35110 / GB-78).